The primary structure comprises 430 residues: MSTITAVWAREILDSRGNPTVEVEVVLESGATGRAAVPSGASTGTREALELRDGDKDRYKGKGVQVAVANVREEIAEALVGQDALRQVNIDNILIELDGTENKERLGANAMLGVSMAVARAGANLLGIPLYQYLGGVNGKLLPVPLMNIINGGEHAPNNLDIQEFMIMPIGAETFAEALRMGAEIFHTLKGLLAADGHNTAVGDEGGFAPNLESHAQAFEYIMKAIEAAGYRPGADVALAIDAAASEFYKDGKYVLAGEGKEFDAQGMIDFYTDFVERFPLISIEDGLAEGDWEGWKKMTDDLGEKIQLVGDDLFVTNPEILAEGIEQGACNSILIKLNQIGTLTETLDTMELAKTAGYTNVVSHRSGETSDHFIADLAVGLNAGQIKTGSLCRSDRLAKYNQLLRIEEDLEDDGIYYGPALKEAFFGED.

Residue Gln-163 participates in (2R)-2-phosphoglycerate binding. Catalysis depends on Glu-205, which acts as the Proton donor. Mg(2+) is bound by residues Asp-242, Glu-285, and Asp-312. (2R)-2-phosphoglycerate is bound by residues Lys-337, Arg-366, Ser-367, and Lys-388. The active-site Proton acceptor is the Lys-337.

The protein belongs to the enolase family. Requires Mg(2+) as cofactor.

It is found in the cytoplasm. The protein resides in the secreted. The protein localises to the cell surface. It carries out the reaction (2R)-2-phosphoglycerate = phosphoenolpyruvate + H2O. It participates in carbohydrate degradation; glycolysis; pyruvate from D-glyceraldehyde 3-phosphate: step 4/5. Its function is as follows. Catalyzes the reversible conversion of 2-phosphoglycerate (2-PG) into phosphoenolpyruvate (PEP). It is essential for the degradation of carbohydrates via glycolysis. This chain is Enolase, found in Maridesulfovibrio salexigens (strain ATCC 14822 / DSM 2638 / NCIMB 8403 / VKM B-1763) (Desulfovibrio salexigens).